A 1514-amino-acid chain; its full sequence is ABC transporter C family member 3 (1514 aa).

Helical transmembrane passes span 35-55 (PLFL…VLFF), 83-103 (ALFC…LSGF), 116-136 (LVSS…SICL), 153-173 (LWLV…FVMY), 183-203 (LLVF…VAVL), 325-345 (ILVT…GPAL), 364-386 (YVLV…HWFF), 439-459 (WYMH…WILY), 463-483 (GLAS…NFPF), and 551-571 (FVFW…CILL). Positions 325-606 (ILVTAFFAFI…LPDTISMIVQ (282 aa)) constitute an ABC transmembrane type-1 1 domain. Residues 640–863 (VEVINSTLSW…GTDFMELIGA (224 aa)) form the ABC transporter 1 domain. 675–682 (GTVGSGKS) contacts ATP. 5 helical membrane passes run 940–960 (YITL…QVLF), 987–1007 (LSTL…CILL), 1077–1097 (IGII…FIPV), 1181–1201 (LSSL…TGVI), and 1205–1225 (LAGL…WLIW). Residues 950–1232 (VPFILLGQVL…LIWTLCNLEN (283 aa)) form the ABC transmembrane type-1 2 domain. An ABC transporter 2 domain is found at 1271-1503 (IRDLQVRYAP…KSSSFSKLVA (233 aa)). 1303–1310 (GRTGSGKS) provides a ligand contact to ATP.

It belongs to the ABC transporter superfamily. ABCC family. Conjugate transporter (TC 3.A.1.208) subfamily. In terms of tissue distribution, ubiquitous.

The protein localises to the membrane. The catalysed reaction is ATP + H2O + xenobioticSide 1 = ADP + phosphate + xenobioticSide 2.. With respect to regulation, glutathione-conjugate transport is inhibited by decyl-glutathione and, to a lower extent, by GS-GS, but not by GSH. All transports are inhibited by vanadate. In terms of biological role, pump for glutathione S-conjugates. Mediates the transport of glutathione conjugates such as chlorodinitrobenzene-GS (DNB-GS), and of chlorophyll catabolites such as Bn-NCC-1. Also transports heavy metals such as cadmium (Cd). The sequence is that of ABC transporter C family member 3 (ABCC3) from Arabidopsis thaliana (Mouse-ear cress).